Here is a 141-residue protein sequence, read N- to C-terminus: Hemoglobin subunit alpha-1 (141 aa).

Residues 1-141 (VLSEGNKKAI…VTYQLSSLYR (141 aa)) enclose the Globin domain. Histidine 59 lines the O2 pocket. Histidine 88 is a binding site for heme b.

This sequence belongs to the globin family. In terms of assembly, heterotetramer of two alpha chains and two beta chains. As to expression, red blood cells.

Functionally, involved in oxygen transport from the lung to the various peripheral tissues. This chain is Hemoglobin subunit alpha-1, found in Torpedo marmorata (Marbled electric ray).